The following is a 258-amino-acid chain: Type III pantothenate kinase (258 aa).

6–13 lines the ATP pocket; sequence DAGNTRIK. Residues tyrosine 98 and 105-108 contribute to the substrate site; that span reads GSDR. Aspartate 107 acts as the Proton acceptor in catalysis. Threonine 131 is a binding site for ATP. Threonine 184 lines the substrate pocket.

The protein belongs to the type III pantothenate kinase family. As to quaternary structure, homodimer. NH4(+) serves as cofactor. It depends on K(+) as a cofactor.

It localises to the cytoplasm. The enzyme catalyses (R)-pantothenate + ATP = (R)-4'-phosphopantothenate + ADP + H(+). Its pathway is cofactor biosynthesis; coenzyme A biosynthesis; CoA from (R)-pantothenate: step 1/5. Catalyzes the phosphorylation of pantothenate (Pan), the first step in CoA biosynthesis. This Herminiimonas arsenicoxydans protein is Type III pantothenate kinase.